Reading from the N-terminus, the 181-residue chain is Large ribosomal subunit protein uL22 (181 aa).

Residues 157–181 (PEAAKKPGKKTSAVEKSKKATAATH) are disordered.

Belongs to the universal ribosomal protein uL22 family.

The protein is Large ribosomal subunit protein uL22 (RpL17) of Biphyllus lunatus (Beetle).